We begin with the raw amino-acid sequence, 689 residues long: Glycine--tRNA ligase beta subunit (689 aa).

Belongs to the class-II aminoacyl-tRNA synthetase family. In terms of assembly, tetramer of two alpha and two beta subunits.

The protein localises to the cytoplasm. The catalysed reaction is tRNA(Gly) + glycine + ATP = glycyl-tRNA(Gly) + AMP + diphosphate. The polypeptide is Glycine--tRNA ligase beta subunit (Actinobacillus pleuropneumoniae serotype 5b (strain L20)).